Reading from the N-terminus, the 427-residue chain is Alpha/beta hydrolase gkaG (427 aa).

Asp368 is an active-site residue.

It belongs to the AB hydrolase superfamily. In terms of assembly, homodimer.

It participates in mycotoxin biosynthesis. Its function is as follows. Alpha/beta hydrolase; part of the gene cluster that mediates the biosynthesis of GKK1032, fungal natural products containing a macrocyclic para-cyclophane connected to a decahydrofluorene ring system that show potent antitumor activities. Within the pathway, gkaG catalyzes the Knoevenagel condensation that affords the 3-pyrrolin-2-one ring, using as substrate the polyketide-tyrosyl acyl thioester product of gkaA. The pathway begins with the PKS-NRPS gkaA which, with the help of the trans-enoyl reductase gkaC, synthesizes the polyketide-tyrosyl acyl thioester product which can be reductively off-loaded by the terminal reductase (R) domain in gkaA. The alpha/beta hydrolase gkaG is then required to catalyze the subsequent Knoevenagel condensation that affords the 3-pyrrolin-2-one ring, whereas the three proteins gkaB, gkaX and gkaZ then function synergistically to form the cyclophane. In Penicillium citrinum, this protein is Alpha/beta hydrolase gkaG.